A 527-amino-acid polypeptide reads, in one-letter code: ATP-dependent RNA helicase DBP3 (527 aa).

The segment covering 1-11 (MSKDHKDKKRK) has biased composition (basic residues). The disordered stretch occupies residues 1–89 (MSKDHKDKKR…TGYSQSPALT (89 aa)). The span at 12 to 24 (HSDEATEEVEKKT) shows a compositional bias: basic and acidic residues. Positions 25 to 44 (KVSKKEKKDKKEKKEKKDKK) are enriched in basic residues. Basic and acidic residues predominate over residues 45 to 71 (EKKDKSEKKDKSEKKEKKEKKESEDVP). The span at 72–89 (TKSSAVVSTGYSQSPALT) shows a compositional bias: polar residues. Positions 119-145 (LGFDQIDLDSRIASVISKFPTPTPIQA) match the Q motif motif. Residues 148–319 (WPYLLSGKDV…STFMNSPVKV (172 aa)) form the Helicase ATP-binding domain. Residue 161 to 168 (AETGSGKT) coordinates ATP. The short motif at 266 to 269 (DEAD) is the DEAD box element. One can recognise a Helicase C-terminal domain in the interval 348–497 (KLLSLLRKYQ…PVPDELLKFG (150 aa)).

It belongs to the DEAD box helicase family. DDX5/DBP2 subfamily.

The protein localises to the nucleus. It localises to the nucleolus. It catalyses the reaction ATP + H2O = ADP + phosphate + H(+). In terms of biological role, ATP-dependent RNA helicase required for 60S ribosomal subunit synthesis. Involved in efficient pre-rRNA processing, predominantly at site A3, which is necessary for the normal formation of 25S and 5.8S rRNAs. This is ATP-dependent RNA helicase DBP3 (DBP3) from Debaryomyces hansenii (strain ATCC 36239 / CBS 767 / BCRC 21394 / JCM 1990 / NBRC 0083 / IGC 2968) (Yeast).